We begin with the raw amino-acid sequence, 147 residues long: Hemoglobin subunit deltaH (147 aa).

One can recognise a Globin domain in the interval 3-147 (RLTDSEKAEV…MANALAHKYH (145 aa)). Heme b-binding residues include H64 and H93.

The protein belongs to the globin family. In terms of assembly, heterotetramer of two delta chains and two alpha chains. In terms of tissue distribution, red blood cells.

The chain is Hemoglobin subunit deltaH from Heterohyrax brucei (Yellow-spotted hyrax).